Here is a 144-residue protein sequence, read N- to C-terminus: Large ribosomal subunit protein uL16 (144 aa).

Belongs to the universal ribosomal protein uL16 family. Part of the 50S ribosomal subunit.

In terms of biological role, binds 23S rRNA and is also seen to make contacts with the A and possibly P site tRNAs. The polypeptide is Large ribosomal subunit protein uL16 (Lactiplantibacillus plantarum (strain ATCC BAA-793 / NCIMB 8826 / WCFS1) (Lactobacillus plantarum)).